A 519-amino-acid chain; its full sequence is Putative thymidine phosphorylase (519 aa).

The protein belongs to the thymidine/pyrimidine-nucleoside phosphorylase family. Type 2 subfamily.

The enzyme catalyses thymidine + phosphate = 2-deoxy-alpha-D-ribose 1-phosphate + thymine. The sequence is that of Putative thymidine phosphorylase from Maricaulis maris (strain MCS10) (Caulobacter maris).